Here is a 471-residue protein sequence, read N- to C-terminus: Putative multidrug resistance protein MdtD (471 aa).

The Periplasmic segment spans residues 1 to 11; sequence MTDLPDSTRWQ. Residues 12 to 32 traverse the membrane as a helical segment; that stretch reads LWIVAFGFFMQSLDTTIVNTA. Topologically, residues 33–48 are cytoplasmic; that stretch reads LPSMAQSLGESPLHMH. Residues 49 to 69 form a helical membrane-spanning segment; it reads MVIVSYVLTVAVMLPASGWLA. The Periplasmic segment spans residues 70–76; that stretch reads DKVGVRN. Residues 77–97 form a helical membrane-spanning segment; sequence IFFTAIVLFTLGSLFCALSGT. Residues 98 to 101 lie on the Cytoplasmic side of the membrane; the sequence is LNEL. The chain crosses the membrane as a helical span at residues 102-124; sequence LLARALQGVGGAMMVPVGRLTVM. At 125–137 the chain is on the periplasmic side; it reads KIVPREQYMAAMT. Residues 138–158 form a helical membrane-spanning segment; sequence FVTLPGQVGPLLGPALGGLLV. Over 159–164 the chain is Cytoplasmic; it reads EYASWH. A helical membrane pass occupies residues 165–185; it reads WIFLINIPVGIIGAIATLMLM. Residues 186–196 lie on the Periplasmic side of the membrane; sequence PNYTMQTRRFD. A helical membrane pass occupies residues 197-217; sequence LSGFLLLAVGMAVLTLALDGS. At 218–224 the chain is on the cytoplasmic side; the sequence is KGTGLSP. A helical membrane pass occupies residues 225–245; sequence LTIDGLVAVGVVALVLYLLHA. At 246-262 the chain is on the periplasmic side; it reads RNNNRALFSLKLFRTRT. The helical transmembrane segment at 263–283 threads the bilayer; the sequence is FSLGLAGSFAGRIGSGMLPFM. At 284-285 the chain is on the cytoplasmic side; the sequence is TP. Residues 286-306 form a helical membrane-spanning segment; that stretch reads VFLQIGLGFSPFHAGLMMIPM. The Periplasmic portion of the chain corresponds to 307 to 341; the sequence is VLGSMGMKRIVVQVVNRFGYRRVLVATTLGLSLVT. Residues 342–362 form a helical membrane-spanning segment; sequence LLFMTTALLGWYYVLPFVLFL. The Cytoplasmic segment spans residues 363–395; it reads QGMVNSTRFSSMNTLTLKDLPDNLASSGNSLLS. The chain crosses the membrane as a helical span at residues 396 to 416; sequence MIMQLSMSIGVTIAGLLLGLF. Residues 417 to 430 lie on the Periplasmic side of the membrane; the sequence is GSQHVSIDSGTTQT. A helical membrane pass occupies residues 431–451; that stretch reads VFMYTWLSMALIIALPAFIFA. Topologically, residues 452–471 are cytoplasmic; that stretch reads RVPNDTHQNVAISRRKRSAQ.

Belongs to the major facilitator superfamily. TCR/Tet family.

Its subcellular location is the cell inner membrane. This is Putative multidrug resistance protein MdtD from Escherichia coli (strain SE11).